Reading from the N-terminus, the 374-residue chain is MKPAIATISRQALRHNIQLIKKLAPKQKLLAMIKANAYGQGLLPAAATLADLVDGFGVARLHEALEVQETGYTGKILLVEGFFDREELLKTLSRGFDTVIHCLEQLELLEQVAKEWQIEQQKRFWQRKTKIYFPINIWLKIDTGMHRLGIHPEQVDLFYARLKSCPLVATISFMSHFSRADELDCGYTEQQIATFEMATEQYSAHSRSIAASSGILYWPQAHYEWVRPGIIMHGISPHYQPITQLGFKPVMTLSSTLIAIRSHKAGEPVGYGGAWISDKATTLGVVAMGYGDGYPRNAPEGTPVLINGRIVPIVGRVSMDMLTVDLGIDSQDQVGDEVILWGNDLLIETVAQHIGVISYELITKLTPRVIFEYR.

Residue K34 is the Proton acceptor; specific for D-alanine of the active site. K34 is subject to N6-(pyridoxal phosphate)lysine. R147 provides a ligand contact to substrate. Catalysis depends on Y271, which acts as the Proton acceptor; specific for L-alanine. M319 contributes to the substrate binding site.

It belongs to the alanine racemase family. Requires pyridoxal 5'-phosphate as cofactor.

The catalysed reaction is L-alanine = D-alanine. It participates in amino-acid biosynthesis; D-alanine biosynthesis; D-alanine from L-alanine: step 1/1. Functionally, catalyzes the interconversion of L-alanine and D-alanine. May also act on other amino acids. The protein is Alanine racemase (alr) of Haemophilus ducreyi (strain 35000HP / ATCC 700724).